We begin with the raw amino-acid sequence, 334 residues long: 6-phosphogluconolactonase (334 aa).

The protein belongs to the cycloisomerase 2 family.

It carries out the reaction 6-phospho-D-glucono-1,5-lactone + H2O = 6-phospho-D-gluconate + H(+). It functions in the pathway carbohydrate degradation; pentose phosphate pathway; D-ribulose 5-phosphate from D-glucose 6-phosphate (oxidative stage): step 2/3. Functionally, catalyzes the hydrolysis of 6-phosphogluconolactone to 6-phosphogluconate. This chain is 6-phosphogluconolactonase, found in Buchnera aphidicola subsp. Acyrthosiphon pisum (strain 5A).